The following is a 117-amino-acid chain: DNA-directed RNA polymerase II subunit RPB11 (117 aa).

Met-1 is subject to N-acetylmethionine.

This sequence belongs to the archaeal Rpo11/eukaryotic RPB11/RPC19 RNA polymerase subunit family. In terms of assembly, component of the RNA polymerase II (Pol II) core complex consisting of 12 subunits: a ten-subunit catalytic core composed of POLR2A/RPB1, POLR2B/RPB2, POLR2C/RPB3, POLR2I/RPB9, POLR2J/RPB11, POLR2E/RPABC1, POLR2F/RPABC2, POLR2H/RPABC3, POLR2K/RPABC4 and POLR2L/RPABC5 and a mobile stalk composed of two subunits POLR2D/RPB4 and POLR2G/RPB7, protruding from the core and functioning primarily in transcription initiation. Part of Pol II(G) complex, in which Pol II core associates with an additional subunit POLR2M; unlike conventional Pol II, Pol II(G) functions as a transcriptional repressor. Part of TBP-based Pol II pre-initiation complex (PIC), in which Pol II core assembles with general transcription factors and other specific initiation factors including GTF2E1, GTF2E2, GTF2F1, GTF2F2, TCEA1, ERCC2, ERCC3, GTF2H2, GTF2H3, GTF2H4, GTF2H5, GTF2A1, GTF2A2, GTF2B and TBP; this large multi-subunit PIC complex mediates DNA unwinding and targets Pol II core to the transcription start site where the first phosphodiester bond forms. Interacts with AATF. Interacts with PTPN6; this interaction promotes the recruitment of RNA pol II to the PCK1 promoter.

Its subcellular location is the nucleus. Functionally, core component of RNA polymerase II (Pol II), a DNA-dependent RNA polymerase which synthesizes mRNA precursors and many functional non-coding RNAs using the four ribonucleoside triphosphates as substrates. The polypeptide is DNA-directed RNA polymerase II subunit RPB11 (Polr2j) (Mus musculus (Mouse)).